Reading from the N-terminus, the 195-residue chain is HTH-type transcriptional regulator BetI (195 aa).

The HTH tetR-type domain occupies 8-68; the sequence is SIRRRQLIDA…ATMRDITSQL (61 aa). A DNA-binding region (H-T-H motif) is located at residues 31–50; it reads TIAQIARRAGVSTGIISHYF.

Its pathway is amine and polyamine biosynthesis; betaine biosynthesis via choline pathway [regulation]. In terms of biological role, repressor involved in the biosynthesis of the osmoprotectant glycine betaine. It represses transcription of the choline transporter BetT and the genes of BetAB involved in the synthesis of glycine betaine. This is HTH-type transcriptional regulator BetI from Shigella flexneri serotype 5b (strain 8401).